The following is a 377-amino-acid chain: MVNTSFETLALDMQIEILARLPLKYLMRCMCVSKKWASLIRGEDFRSAYLLRSMARPRLLFVASRSRKFTRETCFHSVYQEPPLLLSGKRQMLTDNHIAPVFTVSNPILGLLCHQGYNNEIVICNPGLKKFRNLPQIQVPEGASVRSFFGYDKVDKVFKVLCVCVPQTQFGAGWTSKEPKKYQVYTVRSDHEKPSFWRPIICNDDHSVVTDEGLFNGGFLYYGARSSCNKPMVMRFNVSSEAFAVIKLPEEVDIDYHWRLVNYKGKVALVNTFDSKFKFNGVFEIWVRNEVDRKWDKDIIKIPQWTESVDNYNVYFKGTTGTKELVFAPPNWFGEPLFVLYYDKATTNLRRFDIEGMDDQHYSFHTFLDHVDSTWLM.

In terms of domain architecture, F-box spans 3–48 (NTSFETLALDMQIEILARLPLKYLMRCMCVSKKWASLIRGEDFRSA).

The polypeptide is Putative F-box protein At1g70380 (Arabidopsis thaliana (Mouse-ear cress)).